The sequence spans 293 residues: ATP synthase gamma chain (293 aa).

This sequence belongs to the ATPase gamma chain family. In terms of assembly, F-type ATPases have 2 components, CF(1) - the catalytic core - and CF(0) - the membrane proton channel. CF(1) has five subunits: alpha(3), beta(3), gamma(1), delta(1), epsilon(1). CF(0) has three main subunits: a, b and c.

It is found in the cell membrane. Its function is as follows. Produces ATP from ADP in the presence of a proton gradient across the membrane. The gamma chain is believed to be important in regulating ATPase activity and the flow of protons through the CF(0) complex. In Streptococcus agalactiae serotype Ia (strain ATCC 27591 / A909 / CDC SS700), this protein is ATP synthase gamma chain.